Here is a 366-residue protein sequence, read N- to C-terminus: 3-dehydroquinate synthase (366 aa).

NAD(+) contacts are provided by residues 75–80 (DGEQYK), 109–113 (GVIGD), 133–134 (TT), Lys-146, Lys-155, and 173–176 (CLST). Residues Glu-188, His-251, and His-268 each coordinate Zn(2+).

Belongs to the sugar phosphate cyclases superfamily. Dehydroquinate synthase family. It depends on NAD(+) as a cofactor. Requires Co(2+) as cofactor. Zn(2+) is required as a cofactor.

The protein resides in the cytoplasm. It carries out the reaction 7-phospho-2-dehydro-3-deoxy-D-arabino-heptonate = 3-dehydroquinate + phosphate. It participates in metabolic intermediate biosynthesis; chorismate biosynthesis; chorismate from D-erythrose 4-phosphate and phosphoenolpyruvate: step 2/7. Its function is as follows. Catalyzes the conversion of 3-deoxy-D-arabino-heptulosonate 7-phosphate (DAHP) to dehydroquinate (DHQ). This chain is 3-dehydroquinate synthase, found in Vibrio parahaemolyticus serotype O3:K6 (strain RIMD 2210633).